The sequence spans 775 residues: Dipeptidyl peptidase 4 (775 aa).

The first 15 residues, 1 to 15 (MKFLSLLLLAGIAQA), serve as a signal peptide directing secretion. Asparagine 81, asparagine 111, asparagine 170, and asparagine 219 each carry an N-linked (GlcNAc...) asparagine glycan. Catalysis depends on charge relay system residues serine 613, aspartate 690, and histidine 725.

Belongs to the peptidase S9B family.

It localises to the secreted. It catalyses the reaction Release of an N-terminal dipeptide, Xaa-Yaa-|-Zaa-, from a polypeptide, preferentially when Yaa is Pro, provided Zaa is neither Pro nor hydroxyproline.. Functionally, extracellular dipeptidyl-peptidase which removes N-terminal dipeptides sequentially from polypeptides having unsubstituted N-termini provided that the penultimate residue is proline. Contributes to pathogenicity. The polypeptide is Dipeptidyl peptidase 4 (DPP4) (Trichophyton equinum (Horse ringworm fungus)).